The chain runs to 317 residues: N(5)-(carboxyethyl)ornithine synthase (317 aa).

The pyruvate site is built by Arg-15, Lys-71, and His-92. Gly-172–Ser-177 provides a ligand contact to NADP(+).

It belongs to the AlaDH/PNT family. CEOS subfamily. As to quaternary structure, homotetramer.

It catalyses the reaction N(5)-[1(S)-1-carboxyethyl]-L-ornithine + NADP(+) + H2O = L-ornithine + pyruvate + NADPH + H(+). Catalyzes the NADPH-dependent reductive condensation between pyruvic acid and the side chain amino group of L-ornithine to form N(5)-(L-1-carboxyethyl)-L-ornithine. To a lesser extent, can also use L-lysine as substrate (yielding N(6)-(L-1-carboxyethyl)-L-lysine), and the D-isomers of the 2 basic amino acids. Can use alpha-keto acids other than pyruvate, e.g. glyoxylate. This is N(5)-(carboxyethyl)ornithine synthase (ceo) from Clostridium botulinum (strain Hall / ATCC 3502 / NCTC 13319 / Type A).